A 327-amino-acid chain; its full sequence is Phenylalanine--tRNA ligase alpha subunit (327 aa).

E253 is a binding site for Mg(2+).

The protein belongs to the class-II aminoacyl-tRNA synthetase family. Phe-tRNA synthetase alpha subunit type 1 subfamily. As to quaternary structure, tetramer of two alpha and two beta subunits. The cofactor is Mg(2+).

The protein localises to the cytoplasm. It catalyses the reaction tRNA(Phe) + L-phenylalanine + ATP = L-phenylalanyl-tRNA(Phe) + AMP + diphosphate + H(+). This is Phenylalanine--tRNA ligase alpha subunit from Laribacter hongkongensis (strain HLHK9).